The sequence spans 172 residues: uncharacterized protein (172 aa).

An N-terminal signal peptide occupies residues 1–21 (MMKFKKCLLPVAMLASFTLAG). C22 carries the N-palmitoyl cysteine lipid modification. The S-diacylglycerol cysteine moiety is linked to residue C22.

Its subcellular location is the cell membrane. This is an uncharacterized protein from Escherichia coli O157:H7.